A 179-amino-acid chain; its full sequence is Large ribosomal subunit protein uL10 (179 aa).

The segment at 137–179 is binds L7/L12 dimers; the sequence is KEELYAMLVGRVKAPITGLVFALSGILRNLVYVLNAIKEKKSE.

In terms of assembly, part of the ribosomal stalk of the 50S ribosomal subunit. The N-terminus interacts with L11 and 23S rRNA to form the base of the stalk. The C-terminus forms an elongated spine to which 3 L12 dimers bind in a sequential fashion forming a heptameric L10(L12)2(L12)2(L12)2 complex.

Its function is as follows. Forms part of the ribosomal stalk, playing a central role in the interaction of the ribosome with GTP-bound translation factors (such as IF-2, EF-Tu, EF-G and RF3). This Thermotoga maritima (strain ATCC 43589 / DSM 3109 / JCM 10099 / NBRC 100826 / MSB8) protein is Large ribosomal subunit protein uL10 (rplJ).